The following is a 1276-amino-acid chain: Receptor-type guanylate cyclase gcy-28 (1276 aa).

The signal sequence occupies residues 1 to 18; the sequence is MLRWLTLLSCILLTALHG. Residues 19–515 are Extracellular-facing; that stretch reads NIVEDVGAAQ…KSKCPGYPLH (497 aa). N-linked (GlcNAc...) asparagine glycans are attached at residues Asn-87, Asn-196, Asn-338, Asn-384, Asn-387, Asn-414, Asn-428, and Asn-444. The chain crosses the membrane as a helical span at residues 516–536; that stretch reads VYLLMGSFLLILVLVGLFIFF. At 537–1276 the chain is on the cytoplasmic side; the sequence is WRRYKLEQEL…EIPDFGEEFA (740 aa). Disordered regions lie at residues 562–601 and 635–709; these read ESQK…NSDK and IFTR…KKSL. Residues 567 to 577 are compositionally biased toward basic residues; it reads NEKKKAKKRKN. 2 stretches are compositionally biased toward polar residues: residues 590-599 and 642-660; these read RSTSRSSVNS and TPPS…SLQK. The 297-residue stretch at 717–1013 folds into the Protein kinase domain; sequence SFGMVSFKSG…SSVRKAVRSL (297 aa). ATP contacts are provided by residues 723–731 and Lys-756; that span reads FKSGSGGSV. A coiled-coil region spans residues 1017-1063; that stretch reads NETSNLVDNLLKRMEQYANNLEGLVEERTQEYLAEKKKVEELLHQLL. A Guanylate cyclase domain is found at 1086–1215; that stretch reads TIYFSDIVGF…DTVNTSSRME (130 aa). 3 residues coordinate Mg(2+): Asp-1091, Ile-1092, and Asp-1135.

This sequence belongs to the adenylyl cyclase class-4/guanylyl cyclase family. In terms of tissue distribution, expressed in head neurons, ventral cord and tail neurons, body wall muscle, hypodermis, somatic gonad and intestine. Isoform d is expressed specifically in AIA interneurons.

The protein resides in the cell membrane. The protein localises to the cell projection. It localises to the dendrite. Its subcellular location is the axon. It is found in the perikaryon. It carries out the reaction GTP = 3',5'-cyclic GMP + diphosphate. Guanylate cyclase involved in the production of the second messenger cGMP. Regulates olfactory perception in AWC sensory neurons although may not be involved in the primary sensory transduction steps. Its function is as follows. Isoforms c: Regulates sensory integration of conflicting sensory cues in AIA interneurons. In terms of biological role, regulates sensory integration of conflicting sensory cues in AIA interneurons. The protein is Receptor-type guanylate cyclase gcy-28 of Caenorhabditis elegans.